A 1219-amino-acid polypeptide reads, in one-letter code: NHS-like protein 2 (1219 aa).

Disordered stretches follow at residues 162 to 181, 288 to 321, 336 to 364, 400 to 423, 474 to 591, 669 to 741, 854 to 938, 979 to 1003, 1033 to 1087, and 1121 to 1197; these read FRSS…QSAK, FSNF…HSAP, FPSL…SDHP, TPSA…GNSW, GLLA…ELVL, QGSS…SASV, GAEE…STAS, IGLQ…KKPS, LEED…DKTA, and WKET…KTTN. Residues 288-312 are compositionally biased toward polar residues; it reads FSNFSQRDQGHSSSPTGSLARSATS. Residues 352–364 show a composition bias toward basic and acidic residues; that stretch reads GDAHQARSASDHP. At Ser499 the chain carries Phosphoserine. Residues 526-545 are compositionally biased toward polar residues; sequence ASTSSEGSNSTDNIAALSTE. Residues 549–567 are compositionally biased toward basic residues; sequence RHRRQRSKSISLKKAKKKP. Ser575 is subject to Phosphoserine. Low complexity predominate over residues 674–687; the sequence is SLASPSTSRATTPS. At Ser690 the chain carries Phosphoserine. Polar residues-rich tracts occupy residues 708-729 and 897-908; these read MSPS…SMSL and TSPTMAMASRSS. Ser1048 carries the post-translational modification Phosphoserine. The span at 1076–1087 shows a compositional bias: basic and acidic residues; it reads AEEKSLISDKTA. Positions 1131–1144 are enriched in polar residues; sequence SKPSSHSPVKNTAD. The span at 1145 to 1160 shows a compositional bias: low complexity; the sequence is SPTGEAAAAPGPSSSA. Ser1208 is subject to Phosphoserine.

It belongs to the NHS family.

In Mus musculus (Mouse), this protein is NHS-like protein 2.